The sequence spans 279 residues: Membrane protein insertase YidC (279 aa).

A signal peptide spans 1 to 22 (MKHLKRNMALLSVAALSFILTA). A lipid anchor (N-palmitoyl cysteine) is attached at Cys23. A lipid anchor (S-diacylglycerol cysteine) is attached at Cys23. 5 helical membrane-spanning segments follow: residues 35–55 (IWDG…SKLF), 59–79 (YGWG…PLMI), 129–149 (MAGC…YAAV), 170–190 (PYFI…WLSM), and 210–230 (PLVI…YWVV). A compositionally biased stretch (basic and acidic residues) spans 253 to 268 (EEKIQTEKAKRKAIEK). A disordered region spans residues 253–279 (EEKIQTEKAKRKAIEKAKRRAMKSKRK). Basic residues predominate over residues 269 to 279 (AKRRAMKSKRK).

Belongs to the OXA1/ALB3/YidC family. Type 2 subfamily.

The protein resides in the cell membrane. Its function is as follows. Required for the insertion and/or proper folding and/or complex formation of integral membrane proteins into the membrane. Involved in integration of membrane proteins that insert both dependently and independently of the Sec translocase complex, as well as at least some lipoproteins. The polypeptide is Membrane protein insertase YidC (Pediococcus pentosaceus (strain ATCC 25745 / CCUG 21536 / LMG 10740 / 183-1w)).